Consider the following 575-residue polypeptide: Proline--tRNA ligase (575 aa).

The protein belongs to the class-II aminoacyl-tRNA synthetase family. ProS type 1 subfamily. Homodimer.

Its subcellular location is the cytoplasm. The catalysed reaction is tRNA(Pro) + L-proline + ATP = L-prolyl-tRNA(Pro) + AMP + diphosphate. Catalyzes the attachment of proline to tRNA(Pro) in a two-step reaction: proline is first activated by ATP to form Pro-AMP and then transferred to the acceptor end of tRNA(Pro). As ProRS can inadvertently accommodate and process non-cognate amino acids such as alanine and cysteine, to avoid such errors it has two additional distinct editing activities against alanine. One activity is designated as 'pretransfer' editing and involves the tRNA(Pro)-independent hydrolysis of activated Ala-AMP. The other activity is designated 'posttransfer' editing and involves deacylation of mischarged Ala-tRNA(Pro). The misacylated Cys-tRNA(Pro) is not edited by ProRS. This Anaeromyxobacter sp. (strain Fw109-5) protein is Proline--tRNA ligase.